Here is a 450-residue protein sequence, read N- to C-terminus: Exodeoxyribonuclease 7 large subunit (450 aa).

The protein belongs to the XseA family. In terms of assembly, heterooligomer composed of large and small subunits.

The protein resides in the cytoplasm. The enzyme catalyses Exonucleolytic cleavage in either 5'- to 3'- or 3'- to 5'-direction to yield nucleoside 5'-phosphates.. Functionally, bidirectionally degrades single-stranded DNA into large acid-insoluble oligonucleotides, which are then degraded further into small acid-soluble oligonucleotides. This Rickettsia felis (strain ATCC VR-1525 / URRWXCal2) (Rickettsia azadi) protein is Exodeoxyribonuclease 7 large subunit.